The chain runs to 954 residues: MIAREEPATTFARRHIGPSSRDIAAMLETVGAKSLEALMNEALPPSIRQKTPLDLGEGFSETEVLTHMQALAAQNQPLTSLIGQGYSGTILPAVIQRNILENPAWYTAYTPYQPEISQGRLEALFNFQTMICDLTGLDVANASLLDEATAAAEAMALAERASSVKTKAFFVDHEVHPQTLAVLRTRAEPLGWTLVTGDPLHDLDKADVFGAVLQYPGTSGVVRDLRPAIAAIKAKGGLAVVAADLLALTLLTSPGVLGADIAIGSAQRFGVPMGYGGPHAAYMAVCNALKRLLPGRLVGLSVDSRGTPAYRLALQTREQHIRREKATSNICTAQVLLAVISSMYAVYHGPEGLAQIARTVHRHTATLAAGLTRLGFAPLNSTAFDTLTVNAGERQSEIVKRASSQGINLRINADGTLGIALDELTIEETVEALWRAFGATWSYADVEAHAPDLLPADLKRKTAYLTHPVFHEHRSETELLRYMRKLSDRDLALDRAMIPLGSCTMKLNATTEMIPLTWAAFANLHPFAPPEQAEGYFTLFENFEEWLLDITGYDAISLQPNSGAQGEYAGLLAIRGYHAARGESHRTVCLIPSSAHGTNPASANMAGMDVVVVACDARGDVDVDDLRTKSTQHADRLAAIMITYPSTHGVFEERIREICDIVHGHGGQVYLDGANMNAQVGLSRPGDYGADVSHLNLHKTFCIPHGGGGPGMGPIGVKAHLAPFLPGHPAIDDATPSAVGPVSAAPFGSASILTISYIYILMMGSEGLKRATEVAILNANYIAQRLDPHFPVLYRNVKGRVAHECIIDPRALKAKTGVTVDDIAKRLIDYGFHAPTMSFPVPGTLMIEPTESESKAELDRFCDAMIAIRQEIAEIEAGRWKVEASPLRHAPHTAHDIADDAWSRPYSRAQGCFPSGSSRSDKYWCPVGRVDNAYGDRNLVCSCPPVEDYAQAAE.

N6-(pyridoxal phosphate)lysine is present on Lys699.

Belongs to the GcvP family. As to quaternary structure, the glycine cleavage system is composed of four proteins: P, T, L and H. Pyridoxal 5'-phosphate serves as cofactor.

The enzyme catalyses N(6)-[(R)-lipoyl]-L-lysyl-[glycine-cleavage complex H protein] + glycine + H(+) = N(6)-[(R)-S(8)-aminomethyldihydrolipoyl]-L-lysyl-[glycine-cleavage complex H protein] + CO2. Its function is as follows. The glycine cleavage system catalyzes the degradation of glycine. The P protein binds the alpha-amino group of glycine through its pyridoxal phosphate cofactor; CO(2) is released and the remaining methylamine moiety is then transferred to the lipoamide cofactor of the H protein. The sequence is that of Glycine dehydrogenase (decarboxylating) from Nitrobacter winogradskyi (strain ATCC 25391 / DSM 10237 / CIP 104748 / NCIMB 11846 / Nb-255).